A 428-amino-acid polypeptide reads, in one-letter code: Putative POM121-like protein 1 (428 aa).

Disordered regions lie at residues 1–23, 36–204, 254–293, 306–384, and 402–428; these read MDSL…RLSP, KESG…KFPL, DCRP…HKSQ, TEVP…PSTL, and GPQP…SCPK. Residues 44–62 are compositionally biased toward basic and acidic residues; sequence EQDKDPRVQENPGDQRRVP. The segment covering 106–117 has biased composition (low complexity); sequence QTSQTSWTSSCT. Polar residues-rich tracts occupy residues 118–129, 144–155, 260–269, 326–347, and 403–415; these read NRNAISSSYSST, SHCQLTLSSSKT, PSHTLSSLAT, FSSS…QVTS, and PQPQ…RGQN. The segment covering 416–428 has biased composition (low complexity); the sequence is QRSQTSRTSSCPK.

Belongs to the POM121 family.

The chain is Putative POM121-like protein 1 (POM121L1P) from Homo sapiens (Human).